Here is a 222-residue protein sequence, read N- to C-terminus: Type II restriction enzyme AbrI (222 aa).

Disordered regions lie at residues 21 to 45 (GNRE…RRDR) and 161 to 222 (NQRR…SPRI). Positions 22-42 (NREKARQKQQESGKPDQGERR) are enriched in basic and acidic residues. Low complexity predominate over residues 188-202 (SSASGSSRSSFTPRP).

The protein belongs to the XhoI type II restriction endonuclease family.

The catalysed reaction is Endonucleolytic cleavage of DNA to give specific double-stranded fragments with terminal 5'-phosphates.. Functionally, a P subtype restriction enzyme that recognizes the double-stranded sequence 5'-CTCGAG-3' and cleaves after C-1. In Azospirillum brasilense, this protein is Type II restriction enzyme AbrI (abrIR).